We begin with the raw amino-acid sequence, 371 residues long: MIIGIPKEIKNNENRVSLSPSGVHALVEQGHTVIVEKSAGLGSYFEDVDYTEAGASIVNEQAEVWNVDMVMKVKEPLEEEFQYFKEGLILFTYLHLANEEKLTRALLENKVVGIAYETVQLPDRTLPLLTPMSEVAGRMSAQIGAEFLQKYKGGMGILLGGVPGVSKGRVSIIGGGQAGTNAAKIALGLGADVTILDVNPKRLQELEDLFDGRVHTIMSNPLNIEQCVKDSDLVIGAVLIPGAKAPNLVTEDMVKEMRDGAVIVDIAIDQGGIFETTDRISTHDDPTYKKHGVVHYAVANMPGAVPRTSTIALNNATLPYAQQLASKGYLKALQDNHALSLGLNTINGELTNKGVAEALNLSYTDIESALK.

The substrate site is built by Arg-15 and Lys-74. The Proton donor/acceptor role is filled by His-95. Residues Ser-133, 177 to 178 (QA), Asp-197, Ser-219, 238 to 239 (VL), 266 to 269 (IAID), Arg-279, and 298 to 301 (VANM) contribute to the NAD(+) site. The active-site Proton donor/acceptor is the Asp-269.

Belongs to the AlaDH/PNT family. Homohexamer. Trimer of dimer.

The catalysed reaction is L-alanine + NAD(+) + H2O = pyruvate + NH4(+) + NADH + H(+). The protein operates within amino-acid degradation; L-alanine degradation via dehydrogenase pathway; NH(3) and pyruvate from L-alanine: step 1/1. Functionally, catalyzes the reversible reductive amination of pyruvate to L-alanine. May play a role in cell wall synthesis as L-alanine is an important constituent of the peptidoglycan layer. In Staphylococcus saprophyticus subsp. saprophyticus (strain ATCC 15305 / DSM 20229 / NCIMB 8711 / NCTC 7292 / S-41), this protein is Alanine dehydrogenase (ald).